The chain runs to 76 residues: Short coiled-coil protein B (76 aa).

A coiled-coil region spans residues 6-52; the sequence is ENQVELEEKTRLINQVLELQNTLEDLSARVDAVKEENLKLKSENQVL.

Belongs to the SCOC family.

The protein localises to the golgi apparatus membrane. It is found in the golgi apparatus. The protein resides in the trans-Golgi network. Its subcellular location is the cytoplasm. It localises to the cytosol. In terms of biological role, positive regulator of amino acid starvation-induced autophagy. The protein is Short coiled-coil protein B (scocb) of Danio rerio (Zebrafish).